A 272-amino-acid chain; its full sequence is Centromere protein V-like protein 3 (272 aa).

Over residues 1–17 (MGRVRNRATAQRRRRKR) the composition is skewed to basic residues. Disordered regions lie at residues 1 to 23 (MGRV…DPPA) and 65 to 95 (RRAR…KELD). Pro residues predominate over residues 77–88 (PSAPLPDPPAPA). The CENP-V/GFA domain occupies 133 to 246 (HTGGCHCGAV…EEVGGGDPGE (114 aa)). Zn(2+)-binding residues include C137, C139, C157, C159, C162, C201, and C204. The tract at residues 240-272 (GGGDPGEEAAEEHKAIHKTSSQSAPACPREQEQ) is disordered.

It belongs to the Gfa family. Zn(2+) serves as cofactor.

This is Centromere protein V-like protein 3 from Homo sapiens (Human).